We begin with the raw amino-acid sequence, 236 residues long: Alanyl-tRNA editing protein AlaX-M (236 aa).

H101, H105, and H205 together coordinate Zn(2+).

This sequence belongs to the class-II aminoacyl-tRNA synthetase family. Editing domain AlaX-M subfamily. Zn(2+) is required as a cofactor.

It is found in the cytoplasm. In terms of biological role, functions in trans to edit the amino acid moiety from incorrectly charged Ser-tRNA(Ala). The polypeptide is Alanyl-tRNA editing protein AlaX-M (alaXM) (Saccharolobus solfataricus (strain ATCC 35092 / DSM 1617 / JCM 11322 / P2) (Sulfolobus solfataricus)).